The following is a 335-amino-acid chain: MTAKAPPAPHDPARAIDPILERIFSFPRRHFLSAGDLNAPQATDLLDLADAFVAFNRQTSKSLDILKGRTLMNLFFENSTRTQSSFEIAGKRLGADVVNMSPRTSSITKGETLIDTAVTLNAMRPDLLVVRHASSGAASLLSQKVSGSVINAGDGQHEHPTQAVLDALSIRRAFGRVSGLTVAICGDVLHSRVARSNVALLHTLGASVRLVGPPTLMPAQAERWGVTVHHDMKAGIAGADVVMMLRLQLERMQGAFVPSTREYFRFYGLDREKLARAAPKAKVMHPGPMNRGVEIDSDVADDPEISLIQDQVEMGVAARMAVLASLAHRLEEHGQ.

Arginine 81 and threonine 82 together coordinate carbamoyl phosphate. Position 109 (lysine 109) interacts with L-aspartate. Residues arginine 131, histidine 159, and glutamine 162 each coordinate carbamoyl phosphate. The L-aspartate site is built by arginine 192 and arginine 246. Residues glycine 287 and proline 288 each coordinate carbamoyl phosphate.

Belongs to the aspartate/ornithine carbamoyltransferase superfamily. ATCase family. As to quaternary structure, heterododecamer (2C3:3R2) of six catalytic PyrB chains organized as two trimers (C3), and six regulatory PyrI chains organized as three dimers (R2).

It carries out the reaction carbamoyl phosphate + L-aspartate = N-carbamoyl-L-aspartate + phosphate + H(+). The protein operates within pyrimidine metabolism; UMP biosynthesis via de novo pathway; (S)-dihydroorotate from bicarbonate: step 2/3. Catalyzes the condensation of carbamoyl phosphate and aspartate to form carbamoyl aspartate and inorganic phosphate, the committed step in the de novo pyrimidine nucleotide biosynthesis pathway. The sequence is that of Aspartate carbamoyltransferase catalytic subunit from Caulobacter sp. (strain K31).